Here is a 398-residue protein sequence, read N- to C-terminus: Acetate kinase (398 aa).

Asn-7 contacts Mg(2+). Lys-14 lines the ATP pocket. Arg-92 contacts substrate. The active-site Proton donor/acceptor is Asp-149. ATP contacts are provided by residues 209-213, 284-286, and 332-336; these read HLGNG, DFR, and GVGEN. Residue Glu-385 participates in Mg(2+) binding.

The protein belongs to the acetokinase family. As to quaternary structure, homodimer. It depends on Mg(2+) as a cofactor. Mn(2+) serves as cofactor.

It is found in the cytoplasm. The catalysed reaction is acetate + ATP = acetyl phosphate + ADP. It functions in the pathway metabolic intermediate biosynthesis; acetyl-CoA biosynthesis; acetyl-CoA from acetate: step 1/2. Functionally, catalyzes the formation of acetyl phosphate from acetate and ATP. Can also catalyze the reverse reaction. This Clostridioides difficile (strain 630) (Peptoclostridium difficile) protein is Acetate kinase.